A 284-amino-acid chain; its full sequence is 4-diphosphocytidyl-2-C-methyl-D-erythritol kinase (284 aa).

Residue Lys-14 is part of the active site. ATP is bound at residue 98–108; the sequence is PMGGGIGGGSS. Asp-140 is an active-site residue.

Belongs to the GHMP kinase family. IspE subfamily.

The enzyme catalyses 4-CDP-2-C-methyl-D-erythritol + ATP = 4-CDP-2-C-methyl-D-erythritol 2-phosphate + ADP + H(+). Its pathway is isoprenoid biosynthesis; isopentenyl diphosphate biosynthesis via DXP pathway; isopentenyl diphosphate from 1-deoxy-D-xylulose 5-phosphate: step 3/6. In terms of biological role, catalyzes the phosphorylation of the position 2 hydroxy group of 4-diphosphocytidyl-2C-methyl-D-erythritol. The polypeptide is 4-diphosphocytidyl-2-C-methyl-D-erythritol kinase (Shewanella loihica (strain ATCC BAA-1088 / PV-4)).